The sequence spans 235 residues: MIELHQKRLSAPKTYKIPRKVSKWVVKPSPGPHNKEAIPLLVLVRDFLELADTGREARRIISAGEILVDGVVRKDYKFPVGLFDVVTIPKLEKSYRILFDEKGRYIPKEVEDADLKLYKITNKTLVRGGKVQLNLFDGTNILGSNDYKTKDSILLRIPEKEVVDHLKFEEGALVMITGGTHAGEIGRIKSYKIVRSSAPNLVTVEGEERDITTIEDYVFVVGKKDSDKPVIDLGV.

An S4 RNA-binding domain is found at Ile38–Glu101.

Belongs to the eukaryotic ribosomal protein eS4 family.

This is Small ribosomal subunit protein eS4 (rps4e) from Archaeoglobus fulgidus (strain ATCC 49558 / DSM 4304 / JCM 9628 / NBRC 100126 / VC-16).